Consider the following 680-residue polypeptide: DNA-directed RNA polymerase subunit beta' (680 aa).

Zn(2+)-binding residues include C69, C71, C87, and C90. 3 residues coordinate Mg(2+): D489, D491, and D493.

Belongs to the RNA polymerase beta' chain family. RpoC1 subfamily. In plastids the minimal PEP RNA polymerase catalytic core is composed of four subunits: alpha, beta, beta', and beta''. When a (nuclear-encoded) sigma factor is associated with the core the holoenzyme is formed, which can initiate transcription. Requires Mg(2+) as cofactor. The cofactor is Zn(2+).

It localises to the plastid. The protein localises to the chloroplast. It carries out the reaction RNA(n) + a ribonucleoside 5'-triphosphate = RNA(n+1) + diphosphate. DNA-dependent RNA polymerase catalyzes the transcription of DNA into RNA using the four ribonucleoside triphosphates as substrates. The polypeptide is DNA-directed RNA polymerase subunit beta' (Carica papaya (Papaya)).